The primary structure comprises 568 residues: Phosphoprotein (568 aa).

The disordered stretch occupies residues 1–25; it reads MDQDAFFSERDPEAEGETPRKQESL. Basic and acidic residues predominate over residues 7 to 24; it reads FSERDPEAEGETPRKQES. Residues 33–41 form an N0 binding region; that stretch reads DVVLSYKPT. Residues 55-322 form a disordered region; the sequence is DNSKENKPSC…TTANEEGTSN (268 aa). Composition is skewed to basic and acidic residues over residues 56–105, 132–144, 151–167, and 175–190; these read NSKE…HARI, RNTRIDEDSPNER, PTDEDRKMAENSNKREE, and EEVRRGTPLSDDREGR. Polar residues predominate over residues 191-216; that stretch reads TNNNGRSMETSSTHSTRITDVITNPS. The span at 239-265 shows a compositional bias: basic and acidic residues; that stretch reads TRSERTQNSELHKSTSEDSSNLEDHNT. Residues 294–304 are compositionally biased toward low complexity; the sequence is YTTNNANNNTK. A multimerization region spans residues 344 to 411; sequence FELSRSASHV…SSRDLHKRFS (68 aa). Positions 387-416 form a coiled coil; sequence EENRTLLKQIQEEIDSSRDLHKRFSEYQKE. The tract at residues 412 to 445 is l protein binding; the sequence is EYQKEQNSLMMANLSTLHIITDRGGKTGDPSDTT. Disordered regions lie at residues 434 to 455 and 494 to 513; these read RGGKTGDPSDTTRSPSVFTKGK and VLEEHNNEPQASNASRLIPS. The span at 441–450 shows a compositional bias: polar residues; sequence PSDTTRSPSV. Positions 479–568 are interaction with the nucleocapsid (N-RNA); it reads DLIREDELRD…FEEDIDSLTN (90 aa).

Belongs to the respirovirus P protein family. In terms of assembly, homotetramer. Interacts (via multimerization domain) with polymerase L; this interaction forms the polymerase complex. Interacts (via N-terminus) with N0; this interaction allows P to chaperon N0 before encapsidation and form the N-P complex. Interacts (via C-terminus) with N-RNA template; this interaction positions the polymerase on the template.

Essential cofactor of the RNA polymerase L that plays a central role in the transcription and replication by forming the polymerase complex with RNA polymerase L and recruiting L to the genomic N-RNA template for RNA synthesis. Also plays a central role in the encapsidation of nascent RNA chains by forming the encapsidation complex with the nucleocapsid protein N (N-P complex). Acts as a chaperone for newly synthesized free N protein, so-called N0, allowing encapsidation of nascent RNA chains during replication. The nucleoprotein protein N prevents excessive phosphorylation of P, which leads to down-regulation of viral transcription/ replication. Participates, together with N, in the formation of viral factories (viroplasms), which are large inclusions in the host cytoplasm where replication takes place. Recruits host PI4KB and remodel the host endoplasmic reticulum membrane to form viral replication factories. This is Phosphoprotein (P/C) from Human parainfluenza 1 virus (strain CI-5/73) (HPIV-1).